The primary structure comprises 151 residues: Metallothiol transferase FosB (151 aa).

The VOC domain occupies 4–119 (SINHVTYSVS…DGHKFELHTG (116 aa)). Positions 7, 66, and 115 each coordinate Mg(2+). E115 (proton donor/acceptor) is an active-site residue.

The protein belongs to the fosfomycin resistance protein family. FosB subfamily. Homodimer. The cofactor is Mg(2+).

It localises to the cytoplasm. Its function is as follows. Metallothiol transferase which confers resistance to fosfomycin by catalyzing the addition of a thiol cofactor to fosfomycin. L-cysteine is probably the physiological thiol donor. The chain is Metallothiol transferase FosB from Staphylococcus saprophyticus subsp. saprophyticus (strain ATCC 15305 / DSM 20229 / NCIMB 8711 / NCTC 7292 / S-41).